A 285-amino-acid chain; its full sequence is Dihydropteroate synthase (285 aa).

A Pterin-binding domain is found at 18–276 (PKIMGIVNLT…DVKATADALK (259 aa)). N25 provides a ligand contact to Mg(2+). (7,8-dihydropterin-6-yl)methyl diphosphate contacts are provided by residues T66, D99, N119, D190, K229, and 264–266 (RVH).

This sequence belongs to the DHPS family. In terms of assembly, homodimer. The cofactor is Mg(2+).

The enzyme catalyses (7,8-dihydropterin-6-yl)methyl diphosphate + 4-aminobenzoate = 7,8-dihydropteroate + diphosphate. Its pathway is cofactor biosynthesis; tetrahydrofolate biosynthesis; 7,8-dihydrofolate from 2-amino-4-hydroxy-6-hydroxymethyl-7,8-dihydropteridine diphosphate and 4-aminobenzoate: step 1/2. Catalyzes the condensation of para-aminobenzoate (pABA) with 6-hydroxymethyl-7,8-dihydropterin diphosphate (DHPt-PP) to form 7,8-dihydropteroate (H2Pte), the immediate precursor of folate derivatives. The sequence is that of Dihydropteroate synthase (folP) from Neisseria meningitidis serogroup B (strain ATCC BAA-335 / MC58).